The following is a 298-amino-acid chain: Max-like protein X (298 aa).

The segment at 1-63 (MTEPGASPED…PRGCREDSSH (63 aa)) is disordered. A Phosphoserine modification is found at serine 7. A compositionally biased stretch (basic residues) spans 28-37 (GRARARRGAG). Serine 45, serine 48, serine 74, serine 77, and serine 98 each carry phosphoserine. Residues 91–145 (SVVSRANSIGSTSASSVPNTDDEDSDYHQEAYKESYKDRRRRAHTQAEQKRRDAI) form a disordered region. Polar residues predominate over residues 94–109 (SRANSIGSTSASSVPN). 2 stretches are compositionally biased toward basic and acidic residues: residues 116 to 127 (DYHQEAYKESYK) and 135 to 145 (TQAEQKRRDAI). The bHLH domain maps to 129-187 (RRRRAHTQAEQKRRDAIKRGYDDLQTIVPTCQQQDFSIGSQKLSKAIVLQKTIDYIQFL). The leucine-zipper stretch occupies residues 140 to 160 (KRRDAIKRGYDDLQTIVPTCQ).

As to quaternary structure, efficient DNA binding requires dimerization with another bHLH protein. Binds DNA as a heterodimer with MAD1, MAD4, MNT, WBSCR14 and MLXIP. Can also bind DNA as a homodimer. As to expression, expressed in all tissues tested, including spleen, thymus, prostate, ovary, intestine, colon, peripheral blood leukocyte, heart, liver, skeletal muscle and kidney. Lower levels of expression in testis, brain, placenta and lung.

The protein resides in the cytoplasm. Its subcellular location is the nucleus. In terms of biological role, transcription regulator. Forms a sequence-specific DNA-binding protein complex with MAD1, MAD4, MNT, WBSCR14 and MLXIP which recognizes the core sequence 5'-CACGTG-3'. The TCFL4-MAD1, TCFL4-MAD4, TCFL4-WBSCR14 complexes are transcriptional repressors. Plays a role in transcriptional activation of glycolytic target genes. Involved in glucose-responsive gene regulation. The protein is Max-like protein X (MLX) of Homo sapiens (Human).